We begin with the raw amino-acid sequence, 477 residues long: Peptidyl-prolyl cis-trans isomerase FKBP53 (477 aa).

2 disordered regions span residues 104–135 (DYEH…EDEQ) and 153–366 (AAAP…QVRT). A compositionally biased stretch (basic residues) spans 264-274 (KSKKKKNQKEK). Over residues 299–321 (ISQISSNTKAQDGTANNAMSESS) the composition is skewed to polar residues. Residues 322–331 (KTPDKSAEKK) are compositionally biased toward basic and acidic residues. The segment covering 351–366 (VEKQTPADSKSSQVRT) has biased composition (polar residues). In terms of domain architecture, PPIase FKBP-type spans 389-477 (GKTVSVRYIG…TFDVELINVQ (89 aa)).

This sequence belongs to the FKBP-type PPIase family. Interacts with histone H3. As to expression, broadly expressed in leaves, flowers, stems and roots. Detected in root apical meristem region and pollen.

Its subcellular location is the nucleus. The enzyme catalyses [protein]-peptidylproline (omega=180) = [protein]-peptidylproline (omega=0). In terms of biological role, PPIases accelerate the folding of proteins. It catalyzes the cis-trans isomerization of proline imidic peptide bonds in oligopeptides. Histone chaperone possibly involved in H3/H4 deposition to the nucleosome. Associates with 18S rDNA chromatin and negatively regulates the level of its expression. The sequence is that of Peptidyl-prolyl cis-trans isomerase FKBP53 (FKBP53) from Arabidopsis thaliana (Mouse-ear cress).